The following is a 290-amino-acid chain: Lysine export transcriptional regulatory protein LysG (290 aa).

Positions 1-57 (MNPIQLDTLLSIIDEGSFEGASLALSISPSAVSQRVKALEHHVGRVLVSRTQPAKAT) constitute an HTH lysR-type domain. Residues 18–37 (FEGASLALSISPSAVSQRVK) constitute a DNA-binding region (H-T-H motif).

This sequence belongs to the LysR transcriptional regulatory family.

Its function is as follows. Positively regulates the expression of the exporter LysE. Induction requires the presence of a coinducer, which is either intracellular L-lysine, L-arginine or L-citrulline. L-histidine also acts as a coinducer of lysE expression, but this amino acid is not exported by LysE. The lysEG system prevents bacteriostasis due to elevated L-lysine or L-arginine concentrations that arise during growth in the presence of peptides or in mutants possessing a deregulated biosynthesis pathway. This Corynebacterium glutamicum (strain ATCC 13032 / DSM 20300 / JCM 1318 / BCRC 11384 / CCUG 27702 / LMG 3730 / NBRC 12168 / NCIMB 10025 / NRRL B-2784 / 534) protein is Lysine export transcriptional regulatory protein LysG.